A 177-amino-acid chain; its full sequence is Ribosome maturation factor RimM (177 aa).

In terms of domain architecture, PRC barrel spans 100–177 (EDEYYWSDLV…TVLVAWPSDY (78 aa)).

This sequence belongs to the RimM family. Binds ribosomal protein uS19.

It is found in the cytoplasm. Functionally, an accessory protein needed during the final step in the assembly of 30S ribosomal subunit, possibly for assembly of the head region. Essential for efficient processing of 16S rRNA. May be needed both before and after RbfA during the maturation of 16S rRNA. It has affinity for free ribosomal 30S subunits but not for 70S ribosomes. In Psychrobacter cryohalolentis (strain ATCC BAA-1226 / DSM 17306 / VKM B-2378 / K5), this protein is Ribosome maturation factor RimM.